A 181-amino-acid polypeptide reads, in one-letter code: MAASNALLLISGVLLISLAVLCHGDPVVDSDGDAVQLNLGGNYPLYTIQSAAIGFRGGLSTLHKDACKSYVYEAPETDRGLPVGFSASATSQPVMQLGSRYKFSFSMPVPLICDTAWSIGKSTEETGVYKLAACSCEFCKIACPEVGSFNVNGRTLLGIGGEHFTVRFQKFDALAMKTAPQ.

Residues M1–G24 form the signal peptide. Disulfide bonds link C67/C113, C134/C143, and C136/C139.

It belongs to the protease inhibitor I3 (leguminous Kunitz-type inhibitor) family.

The protein resides in the secreted. Functionally, possesses two reactive sites. Inhibits an equimolar amount of trypsin and chymotrypsin simultaneously, and inhibits kallikrein weakly. The sequence is that of Proteinase inhibitor A from Sagittaria sagittifolia (Arrowhead).